Consider the following 210-residue polypeptide: NADH dehydrogenase [ubiquinone] iron-sulfur protein 8, mitochondrial (210 aa).

Residues 1–34 constitute a mitochondrion transit peptide; the sequence is MRCLTTPMLLRALAQAARAGPPCGRSLHSSAVAA. 2 4Fe-4S ferredoxin-type domains span residues 102–131 and 141–170; these read RRYP…IEAE and TRYD…EGPN. The [4Fe-4S] cluster site is built by Cys-111, Cys-114, Cys-117, Cys-121, Cys-150, Cys-153, Cys-156, and Cys-160.

It belongs to the complex I 23 kDa subunit family. Core subunit of respiratory chain NADH dehydrogenase (Complex I) which is composed of 45 different subunits. This is a component of the iron-sulfur (IP) fragment of the enzyme. Interacts with RAB5IF. Requires [4Fe-4S] cluster as cofactor.

It localises to the mitochondrion inner membrane. The enzyme catalyses a ubiquinone + NADH + 5 H(+)(in) = a ubiquinol + NAD(+) + 4 H(+)(out). Core subunit of the mitochondrial membrane respiratory chain NADH dehydrogenase (Complex I) which catalyzes electron transfer from NADH through the respiratory chain, using ubiquinone as an electron acceptor. Essential for the catalytic activity and assembly of complex I. In Pongo abelii (Sumatran orangutan), this protein is NADH dehydrogenase [ubiquinone] iron-sulfur protein 8, mitochondrial (NDUFS8).